The sequence spans 159 residues: MRCPFCRHDDTQVVDSRVSEDGAAIRRRRRCSACDKRFTTYERVELNLPAVVKKDGSRTEFDRRKIVASMQLALRKRPVAADAIDAAVARIEYQLLATGEREVRSEKLGELVMNELRGLDTIAYVRFASVYRRFEDVSEFADVIEEFRRASPAKTPRKR.

Residues 3–34 (CPFCRHDDTQVVDSRVSEDGAAIRRRRRCSAC) fold into a zinc finger. One can recognise an ATP-cone domain in the interval 49 to 139 (PAVVKKDGSR…VYRRFEDVSE (91 aa)).

The protein belongs to the NrdR family. Requires Zn(2+) as cofactor.

Functionally, negatively regulates transcription of bacterial ribonucleotide reductase nrd genes and operons by binding to NrdR-boxes. This Burkholderia cenocepacia (strain HI2424) protein is Transcriptional repressor NrdR.